A 449-amino-acid chain; its full sequence is Adenylosuccinate synthetase (449 aa).

Residues 37–43 (GDEGKGK) and 65–67 (GHT) contribute to the GTP site. The active-site Proton acceptor is Asp-38. Residues Asp-38 and Gly-65 each contribute to the Mg(2+) site. Residues 38–41 (DEGK), 63–66 (NAGH), Thr-155, Arg-169, Asn-247, Thr-262, and Arg-326 each bind IMP. The active-site Proton donor is the His-66. A substrate-binding site is contributed by 322 to 328 (VTTKRKR). GTP-binding positions include Arg-328, 354–356 (KLD), and 437–439 (GVG).

It belongs to the adenylosuccinate synthetase family. In terms of assembly, homodimer. The cofactor is Mg(2+).

It is found in the cytoplasm. It catalyses the reaction IMP + L-aspartate + GTP = N(6)-(1,2-dicarboxyethyl)-AMP + GDP + phosphate + 2 H(+). It functions in the pathway purine metabolism; AMP biosynthesis via de novo pathway; AMP from IMP: step 1/2. Its function is as follows. Plays an important role in the de novo pathway and in the salvage pathway of purine nucleotide biosynthesis. Catalyzes the first committed step in the biosynthesis of AMP from IMP. The polypeptide is Adenylosuccinate synthetase (Drosophila willistoni (Fruit fly)).